A 483-amino-acid polypeptide reads, in one-letter code: tRNA-2-methylthio-N(6)-dimethylallyladenosine synthase (483 aa).

One can recognise an MTTase N-terminal domain in the interval 31–148 (KKLYIETQGC…LPQMLDQHHA (118 aa)). [4Fe-4S] cluster contacts are provided by C40, C77, C111, C192, C196, and C199. Residues 178 to 410 (RVEGFKAFVS…QQVIKQSSIE (233 aa)) form the Radical SAM core domain. Positions 413–477 (DAMLGKIERV…LNLVYGELLN (65 aa)) constitute a TRAM domain.

Belongs to the methylthiotransferase family. MiaB subfamily. In terms of assembly, monomer. [4Fe-4S] cluster serves as cofactor.

It localises to the cytoplasm. The enzyme catalyses N(6)-dimethylallyladenosine(37) in tRNA + (sulfur carrier)-SH + AH2 + 2 S-adenosyl-L-methionine = 2-methylsulfanyl-N(6)-dimethylallyladenosine(37) in tRNA + (sulfur carrier)-H + 5'-deoxyadenosine + L-methionine + A + S-adenosyl-L-homocysteine + 2 H(+). Functionally, catalyzes the methylthiolation of N6-(dimethylallyl)adenosine (i(6)A), leading to the formation of 2-methylthio-N6-(dimethylallyl)adenosine (ms(2)i(6)A) at position 37 in tRNAs that read codons beginning with uridine. The sequence is that of tRNA-2-methylthio-N(6)-dimethylallyladenosine synthase from Acinetobacter baumannii (strain ACICU).